Consider the following 417-residue polypeptide: MSKLKITGGNPLFGKVEISGAKNAAVAILPATIMASKGVCTIENTPNIEDVHCIERILNGLGCEIKRQSNSILQIDSTNITKTDANTEDVRKMRASYYLIGALLGRFKKARVELPGGCPIGVRPIDQHIKGFEALGAHVEIEHGAVIVKADKLIGTNIFFDVVSVGATINVMLAATLAEGNTVLENVAKEPHVVDVANFLNSMGANIKGAGTDIIRVTGVKELKGCTYSVIPDQIEAGTYMIATAACGGEVTINNVIPKHLESITAKLIEMGVDVIENGDSVTVKSKGNFKGANIKTQPYPGFPTDVQQPMSTLLTIAKGRSIVNESIWESRFKHVDELKKMGANIKVEGRTAIIDGVPKLTGAIVKATDLRAGAAMVIAGLLAEGDTEILGVEHIDRGYPNIENKFRSLGATIVRL.

Position 22–23 (22–23 (KN)) interacts with phosphoenolpyruvate. Arg94 provides a ligand contact to UDP-N-acetyl-alpha-D-glucosamine. Cys118 acts as the Proton donor in catalysis. 2-(S-cysteinyl)pyruvic acid O-phosphothioketal is present on Cys118. UDP-N-acetyl-alpha-D-glucosamine-binding positions include 123 to 127 (RPIDQ), Asp306, and Ile328.

The protein belongs to the EPSP synthase family. MurA subfamily.

The protein localises to the cytoplasm. The enzyme catalyses phosphoenolpyruvate + UDP-N-acetyl-alpha-D-glucosamine = UDP-N-acetyl-3-O-(1-carboxyvinyl)-alpha-D-glucosamine + phosphate. Its pathway is cell wall biogenesis; peptidoglycan biosynthesis. Its function is as follows. Cell wall formation. Adds enolpyruvyl to UDP-N-acetylglucosamine. The chain is UDP-N-acetylglucosamine 1-carboxyvinyltransferase from Clostridium botulinum (strain ATCC 19397 / Type A).